The following is a 366-amino-acid chain: tRNA/tmRNA (uracil-C(5))-methyltransferase (366 aa).

Residues Gln-190, Tyr-218, Asn-223, Glu-239, and Asp-299 each contribute to the S-adenosyl-L-methionine site. Catalysis depends on Cys-324, which acts as the Nucleophile. Catalysis depends on Glu-358, which acts as the Proton acceptor.

The protein belongs to the class I-like SAM-binding methyltransferase superfamily. RNA M5U methyltransferase family. TrmA subfamily.

The enzyme catalyses uridine(54) in tRNA + S-adenosyl-L-methionine = 5-methyluridine(54) in tRNA + S-adenosyl-L-homocysteine + H(+). It catalyses the reaction uridine(341) in tmRNA + S-adenosyl-L-methionine = 5-methyluridine(341) in tmRNA + S-adenosyl-L-homocysteine + H(+). Its function is as follows. Dual-specificity methyltransferase that catalyzes the formation of 5-methyluridine at position 54 (m5U54) in all tRNAs, and that of position 341 (m5U341) in tmRNA (transfer-mRNA). The protein is tRNA/tmRNA (uracil-C(5))-methyltransferase of Escherichia coli (strain UTI89 / UPEC).